A 598-amino-acid chain; its full sequence is Elongation factor 4 (598 aa).

Positions 4–181 constitute a tr-type G domain; that stretch reads KKIRNFAIIA…AIVNLIPPPQ (178 aa). Residues 16–21 and 128–131 contribute to the GTP site; these read DHGKST and NKID.

It belongs to the TRAFAC class translation factor GTPase superfamily. Classic translation factor GTPase family. LepA subfamily.

It localises to the cell membrane. It catalyses the reaction GTP + H2O = GDP + phosphate + H(+). Required for accurate and efficient protein synthesis under certain stress conditions. May act as a fidelity factor of the translation reaction, by catalyzing a one-codon backward translocation of tRNAs on improperly translocated ribosomes. Back-translocation proceeds from a post-translocation (POST) complex to a pre-translocation (PRE) complex, thus giving elongation factor G a second chance to translocate the tRNAs correctly. Binds to ribosomes in a GTP-dependent manner. The sequence is that of Elongation factor 4 from Mesomycoplasma hyopneumoniae (strain J / ATCC 25934 / NCTC 10110) (Mycoplasma hyopneumoniae).